A 470-amino-acid chain; its full sequence is Suppressor of SWI4 1 homolog (470 aa).

The Brix domain occupies 29–292 (PHSFVFTRGR…LIKIQEGVGN (264 aa)). Ser238 and Ser240 each carry phosphoserine. Disordered regions lie at residues 240-264 (SEVEPDGEHNTTELPQAVAGRGNMQ) and 323-470 (AQRQ…RRRN). Residues 342–355 (AHKKKSLAGIKRAR) show a composition bias toward basic residues. Ser362 carries the post-translational modification Phosphoserine. Lys441 is modified (N6-acetyllysine). Positions 447–457 (QRGKAKPRPRA) are enriched in basic residues.

It localises to the nucleus. Its subcellular location is the nucleolus. Functionally, may have a role in cell growth. The polypeptide is Suppressor of SWI4 1 homolog (Ppan) (Mus musculus (Mouse)).